The following is a 201-amino-acid chain: IMP cyclohydrolase (201 aa).

Belongs to the archaeal IMP cyclohydrolase family.

The catalysed reaction is IMP + H2O = 5-formamido-1-(5-phospho-D-ribosyl)imidazole-4-carboxamide. Its pathway is purine metabolism; IMP biosynthesis via de novo pathway; IMP from 5-formamido-1-(5-phospho-D-ribosyl)imidazole-4-carboxamide: step 1/1. In terms of biological role, catalyzes the cyclization of 5-formylamidoimidazole-4-carboxamide ribonucleotide to IMP. The polypeptide is IMP cyclohydrolase (Methanocella arvoryzae (strain DSM 22066 / NBRC 105507 / MRE50)).